We begin with the raw amino-acid sequence, 195 residues long: ATP-dependent Clp protease proteolytic subunit (195 aa).

The active-site Nucleophile is Ser98. His123 is a catalytic residue.

Belongs to the peptidase S14 family. Fourteen ClpP subunits assemble into 2 heptameric rings which stack back to back to give a disk-like structure with a central cavity, resembling the structure of eukaryotic proteasomes.

It is found in the cytoplasm. The enzyme catalyses Hydrolysis of proteins to small peptides in the presence of ATP and magnesium. alpha-casein is the usual test substrate. In the absence of ATP, only oligopeptides shorter than five residues are hydrolyzed (such as succinyl-Leu-Tyr-|-NHMec, and Leu-Tyr-Leu-|-Tyr-Trp, in which cleavage of the -Tyr-|-Leu- and -Tyr-|-Trp bonds also occurs).. Cleaves peptides in various proteins in a process that requires ATP hydrolysis. Has a chymotrypsin-like activity. Plays a major role in the degradation of misfolded proteins. This Helicobacter pylori (strain J99 / ATCC 700824) (Campylobacter pylori J99) protein is ATP-dependent Clp protease proteolytic subunit.